Here is a 290-residue protein sequence, read N- to C-terminus: UPF0761 membrane protein YihY (290 aa).

Transmembrane regions (helical) follow at residues 44 to 64, 104 to 124, 140 to 160, 183 to 203, 210 to 230, and 244 to 264; these read LLSLVPLIAVVFALFAAFPMF, VGACGLIVTALLLMYAIDSAL, FAVYWMILTLGPLLAGASLAI, VLPLLLSWISFWLLYSIVPTT, AIVGAFVAALLFEAGKKGFAL, and VLAVIPILFVWVYWTWCIVLL.

This sequence belongs to the UPF0761 family.

It is found in the cell inner membrane. This is UPF0761 membrane protein YihY from Salmonella arizonae (strain ATCC BAA-731 / CDC346-86 / RSK2980).